Consider the following 347-residue polypeptide: MALDALASILETVLRNCGINEISRVTTKFEEALDDCGMKVDDWREAYYKERFPKRMTATTMASQIMNFEIENLQLRNKAWAEGADRKFRLLSSFEIGNKDGHTILVPKTRNAEILLANSTSDLKLSSFPSEAVAKLAEENEKMRKQIEHLREQQTSKSTATLCEALENMTERMKLIEREKETVRRMFLECDKTNQRLRKQIQICEEEATDRLVLVNSHHREEILIMKREIYRLQMENVTLKEQIDSIEQELDHSNRIVRGLANRAGLVVDEVDSGNETSDLSDDSDHDDHENSESDLEDMMDPGEDERIPRGGENPRRQARMLQMREEMERLHEDMEILNLNLDLDI.

Residues 230–257 (IYRLQMENVTLKEQIDSIEQELDHSNRI) adopt a coiled-coil conformation. Acidic residues-rich tracts occupy residues 274 to 286 (SGNE…DDSD) and 294 to 305 (ESDLEDMMDPGE). A disordered region spans residues 274–321 (SGNETSDLSDDSDHDDHENSESDLEDMMDPGEDERIPRGGENPRRQAR). Basic and acidic residues predominate over residues 306-317 (DERIPRGGENPR).

It belongs to the rotavirus NSP3 family.

It is found in the host cytoplasm. In terms of biological role, may play a role in stimulating the translation of viral mRNAs. The protein is Non-structural protein 3 of Homo sapiens (Human).